Consider the following 90-residue polypeptide: Mitochondrial import inner membrane translocase subunit Tim10-B (90 aa).

Positions 29-54 match the Twin CX3C motif motif; it reads CHKKCVPPHYKEAELSKGESVCLDRC. 2 disulfide bridges follow: Cys29/Cys54 and Cys33/Cys50.

Belongs to the small Tim family. As to quaternary structure, heterohexamer; composed of 3 copies of TIMM9 and 3 copies of TIMM10/TIM10A, named soluble 70 kDa complex. The complex forms a 6-bladed alpha-propeller structure and associates with the TIMM22 component of the TIM22 complex. Interacts with multi-pass transmembrane proteins in transit.

It is found in the mitochondrion inner membrane. Its function is as follows. Mitochondrial intermembrane chaperone that participates in the import and insertion of multi-pass transmembrane proteins into the mitochondrial inner membrane. May also be required for the transfer of beta-barrel precursors from the TOM complex to the sorting and assembly machinery (SAM complex) of the outer membrane. Acts as a chaperone-like protein that protects the hydrophobic precursors from aggregation and guide them through the mitochondrial intermembrane space. The protein is Mitochondrial import inner membrane translocase subunit Tim10-B (timm10-b) of Xenopus laevis (African clawed frog).